The primary structure comprises 232 residues: tRNA1(Val) (adenine(37)-N6)-methyltransferase (232 aa).

This sequence belongs to the methyltransferase superfamily. tRNA (adenine-N(6)-)-methyltransferase family.

The protein localises to the cytoplasm. The enzyme catalyses adenosine(37) in tRNA1(Val) + S-adenosyl-L-methionine = N(6)-methyladenosine(37) in tRNA1(Val) + S-adenosyl-L-homocysteine + H(+). Functionally, specifically methylates the adenine in position 37 of tRNA(1)(Val) (anticodon cmo5UAC). This chain is tRNA1(Val) (adenine(37)-N6)-methyltransferase, found in Haemophilus influenzae (strain ATCC 51907 / DSM 11121 / KW20 / Rd).